Reading from the N-terminus, the 149-residue chain is NPC intracellular cholesterol transporter 2 (149 aa).

An N-terminal signal peptide occupies residues 1–19; it reads MHFLAAAFLLLTLSASALA. Intrachain disulfides connect Cys27–Cys140, Cys42–Cys47, and Cys93–Cys99. An N-linked (GlcNAc...) asparagine glycan is attached at Asn58. Lys116 carries the N6-acetyllysine modification.

Belongs to the NPC2 family. As to quaternary structure, interacts with NPC1 (via the second lumenal domain) in a cholestrol-dependent manner. Interacts with NUS1/NgBR, the interaction stabilizes NCP2 and regulates cholesterol trafficking. Interacts with DHDDS. Interacts with NEDD4L (via C2 domain). Interacts with NPC1L1. N-glycosylated. Found in the epididymal fluid as a 19 kDa glycoprotein that is processed during its passage through the epididymis into a 16 kDa protein. As to expression, found in the fluid from the distal caput to cauda epididymis, not detected in the rete testis and the proximal and middle caput epididymal fluids (at protein level).

It is found in the secreted. It localises to the endoplasmic reticulum. Its subcellular location is the lysosome. The catalysed reaction is cholesterol(in) = cholesterol(out). Its function is as follows. Intracellular cholesterol transporter which acts in concert with NPC1 and plays an important role in the egress of cholesterol from the lysosomal compartment. Unesterified cholesterol that has been released from LDLs in the lumen of the late endosomes/lysosomes is transferred by NPC2 to the cholesterol-binding pocket in the N-terminal domain of NPC1. May bind and mobilize cholesterol that is associated with membranes. NPC2 binds cholesterol with a 1:1 stoichiometry. Can bind a variety of sterols, including lathosterol, desmosterol and the plant sterols stigmasterol and beta-sitosterol. The secreted form of NCP2 regulates biliary cholesterol secretion via stimulation of ABCG5/ABCG8-mediated cholesterol transport. The protein is NPC intracellular cholesterol transporter 2 of Sus scrofa (Pig).